We begin with the raw amino-acid sequence, 90 residues long: YcgL domain-containing protein plu2139 (90 aa).

The region spanning 1–85 (MICAIYSSPK…PVENLMNAHL (85 aa)) is the YcgL domain.

The protein is YcgL domain-containing protein plu2139 of Photorhabdus laumondii subsp. laumondii (strain DSM 15139 / CIP 105565 / TT01) (Photorhabdus luminescens subsp. laumondii).